A 136-amino-acid chain; its full sequence is Large ribosomal subunit protein bL20c (136 aa).

Belongs to the bacterial ribosomal protein bL20 family.

Its subcellular location is the plastid. The protein resides in the chloroplast. In terms of biological role, binds directly to 23S ribosomal RNA and is necessary for the in vitro assembly process of the 50S ribosomal subunit. It is not involved in the protein synthesizing functions of that subunit. The chain is Large ribosomal subunit protein bL20c from Huperzia lucidula (Shining clubmoss).